Here is a 568-residue protein sequence, read N- to C-terminus: Putative DEAD-box RNA helicase HEL64 (568 aa).

The interval 1 to 34 is disordered; that stretch reads MEETYSPFTGRQGQYNQGYNGGGRRDSRGGMGER. Basic and acidic residues predominate over residues 23-34; the sequence is GRRDSRGGMGER. A Q motif motif is present at residues 102–130; that stretch reads FDHLCGIVPPYLLKKLTAQNFTAPTPVQA. The region spanning 133–307 is the Helicase ATP-binding domain; it reads WPVLLSGRDL…AEFQKQWIRI (175 aa). An ATP-binding site is contributed by 146–153; it reads AKTGSGKT. A DEAD box motif is present at residues 255 to 258; sequence DEAD. The Helicase C-terminal domain occupies 335–483; it reads ELRKLMQEHR…EIPDWMIEWN (149 aa).

Belongs to the DEAD box helicase family. DDX5/DBP2 subfamily.

The protein resides in the nucleus. It catalyses the reaction ATP + H2O = ADP + phosphate + H(+). The sequence is that of Putative DEAD-box RNA helicase HEL64 (HEL64) from Trypanosoma brucei brucei.